A 394-amino-acid chain; its full sequence is Protein STRICTOSIDINE SYNTHASE-LIKE 1 (394 aa).

The N-terminal stretch at 1 to 21 (MESLLLIAYAFLYLFLLSHEA) is a signal peptide. Basic and acidic residues predominate over residues 61–73 (GLEKRPNHSEDNP). The tract at residues 61-92 (GLEKRPNHSEDNPPSRGWTGEPGLDPRGEGPY) is disordered. Residues Asn-67, Asn-122, and Asn-196 are each glycosylated (N-linked (GlcNAc...) asparagine).

The protein belongs to the strictosidine synthase family.

It localises to the vacuole. In Arabidopsis thaliana (Mouse-ear cress), this protein is Protein STRICTOSIDINE SYNTHASE-LIKE 1.